We begin with the raw amino-acid sequence, 332 residues long: Glycerol-3-phosphate dehydrogenase [NAD(P)+] (332 aa).

3 residues coordinate NADPH: Trp-11, Arg-30, and Lys-108. Sn-glycerol 3-phosphate is bound by residues Lys-108, Gly-137, and Ser-139. Ala-141 contributes to the NADPH binding site. Sn-glycerol 3-phosphate is bound by residues Lys-192, Asp-245, Ser-255, Arg-256, and Asn-257. The active-site Proton acceptor is the Lys-192. Position 256 (Arg-256) interacts with NADPH. NADPH-binding residues include Val-280 and Glu-282.

Belongs to the NAD-dependent glycerol-3-phosphate dehydrogenase family.

Its subcellular location is the cytoplasm. It carries out the reaction sn-glycerol 3-phosphate + NAD(+) = dihydroxyacetone phosphate + NADH + H(+). The catalysed reaction is sn-glycerol 3-phosphate + NADP(+) = dihydroxyacetone phosphate + NADPH + H(+). It functions in the pathway membrane lipid metabolism; glycerophospholipid metabolism. Catalyzes the reduction of the glycolytic intermediate dihydroxyacetone phosphate (DHAP) to sn-glycerol 3-phosphate (G3P), the key precursor for phospholipid synthesis. The sequence is that of Glycerol-3-phosphate dehydrogenase [NAD(P)+] from Burkholderia cenocepacia (strain HI2424).